Consider the following 240-residue polypeptide: Uridylate kinase (240 aa).

12-15 (KLSG) serves as a coordination point for ATP. Positions 20–25 (GDQGKG) are involved in allosteric activation by GTP. A UMP-binding site is contributed by Gly54. 2 residues coordinate ATP: Gly55 and Arg59. UMP-binding positions include Asp74 and 135-142 (TGSPYFST). Residues Asn163, Tyr169, and Asp172 each coordinate ATP.

Belongs to the UMP kinase family. As to quaternary structure, homohexamer.

The protein localises to the cytoplasm. It catalyses the reaction UMP + ATP = UDP + ADP. Its pathway is pyrimidine metabolism; CTP biosynthesis via de novo pathway; UDP from UMP (UMPK route): step 1/1. Allosterically activated by GTP. Inhibited by UTP. Functionally, catalyzes the reversible phosphorylation of UMP to UDP. This Ligilactobacillus salivarius (strain UCC118) (Lactobacillus salivarius) protein is Uridylate kinase.